The following is a 972-amino-acid chain: MDTDLYDEFGNYIGPELDSDDEDDELGRESKELDELEDDDDDDDMGDHDEDHPGMEVVLHEDKKYYPTAEEVYGPEVETIVQEEDTQPLTEPIIKPVKTKKFSLMEQTLPVTVYEMDFLADLMDNSELIRNVTLCGHLHHGKTCFVDCLIEQTHPEIRKRYDQDLCYTDILFTEQERGVGIKSTPVTIVLPDTKGKSFLFNIIDTPGHVNFSDEVTAGLRISDGVVLFIDAAEGVMLNTERLIKHAVQERLAVTVCINKIDRLILELKLPPTDAYYKLRHIVDEVNGLISMYSTDENLVLSPLLGNVCFSSSQYSICFTLGSFAKIYADTYGDINYQEFAKRLWGDIYFNPKTRKFTKKAPTSSSQRSFVEFILEPLYKILAQVVGDVDTTLPRTLDELGIHLTKEELKLNIRPLLRLVCKKFFGEFTGFVDMCVQHIPSPKVGAKTKIEHTYTGGVDSDLGEAMSECDPDGPLMCHTTKMYSTDDGVQFHAFGRVLSGTIHAGQPVKVLGENYTLEDEEDSQICTVGRLWISVARYHIEVNRVPAGNWVLIEGVDQPIVKTATVTEPRGNEEAQIFRPLKFNTTSVIKIAVEPVNPSELPKMLDGLRKVNKSYPSLTTKVEESGEHVILGTGELYLDCVMHDLRKMYSEIDIKVADPVVTFCETVVETSSLKCFAETPNKKNKITMIAEPLEKGLAEDIENEVVQITWNRKKLGEFFQTKYDWDLLAARSIWAFGPDATGPNILVDDTLPSEVDKALLGSVKDSIVQGFQWGTREGPLCDELIRNVKFKILDAVIAQEPLHRGGGQIIPTARRVVYSAFLMATPRLMEPYYFVEVQAPADCVSAVYTVLARRRGHVTQDAPIPGSPLYTIKAFIPAIDSFGFETDLRTHTQGQAFSLSVFHHWQIVPGDPLDKSIVIRPLEPQPAPHLAREFMIKTRRRKGLSEDVSISKFFDDPMLLELAKQDVVLNYPM.

Residues 1–53 (MDTDLYDEFGNYIGPELDSDDEDDELGRESKELDELEDDDDDDDMGDHDEDHP) are disordered. Composition is skewed to acidic residues over residues 17 to 26 (LDSDDEDDEL) and 34 to 48 (DELEDDDDDDDMGDH). Positions 127-409 (ELIRNVTLCG…GIHLTKEELK (283 aa)) constitute a tr-type G domain. Residues 136-143 (GHLHHGKT), 204-208 (DTPGH), and 258-261 (NKID) each bind GTP.

This sequence belongs to the TRAFAC class translation factor GTPase superfamily. Classic translation factor GTPase family. EF-G/EF-2 subfamily. In terms of assembly, component of the U5 snRNP and the U4/U6-U5 tri-snRNP complex, a building block of the spliceosome. Component of the pre-catalytic, catalytic and post-catalytic spliceosome complexes. Component of the minor spliceosome, which splices U12-type introns.

Its subcellular location is the nucleus. Its function is as follows. Required for pre-mRNA splicing as component of the spliceosome, including pre-catalytic, catalytic and post-catalytic spliceosomal complexes. Component of the U5 snRNP and the U4/U6-U5 tri-snRNP complex, a building block of the spliceosome. As a component of the minor spliceosome, involved in the splicing of U12-type introns in pre-mRNAs. The chain is 116 kDa U5 small nuclear ribonucleoprotein component (EFTUD2) from Gallus gallus (Chicken).